Here is a 105-residue protein sequence, read N- to C-terminus: MRGAVHIFIMLLLATASDCAVITGACERDIQCGAGTCCAISLWLRGLRLCTPLGREGEECHPGSHKIPFLRKRQHHTCPCSPSLLCSRFPDGRYRCFRDLKNANF.

An N-terminal signal peptide occupies residues 1–19 (MRGAVHIFIMLLLATASDC). Cystine bridges form between cysteine 26–cysteine 38, cysteine 32–cysteine 50, cysteine 37–cysteine 78, cysteine 60–cysteine 86, and cysteine 80–cysteine 96.

The protein belongs to the AVIT (prokineticin) family. Highly expressed in liver and ovary and weakly expressed in testis and placenta. Expressed in mucosa and mesenchyme of embryonic gut during enteric nervous system development (at protein level). Predominantly expressed in kidney and liver. Also expressed in lung, ovary, placenta and testis. In fetal liver, is restricted to and highly expressed in hepatocytes. In adult kidney, expression is restricted to the endothelial tubule cells. In placenta, expressed throughout gestation.

The protein localises to the secreted. Its function is as follows. Potently contracts gastrointestinal (GI) smooth muscle. Induces proliferation, migration and fenestration (the formation of membrane discontinuities) in capillary endothelial cells. Induces proliferation and differentiation, but not migration, of enteric neural crest cells. Directly influences neuroblastoma progression by promoting the proliferation and migration of neuroblastoma cells. Positively regulates PTGS2 expression and prostaglandin synthesis. May play a role in placentation. May play a role in normal and pathological testis angiogenesis. The polypeptide is Prokineticin-1 (Mus musculus (Mouse)).